A 387-amino-acid polypeptide reads, in one-letter code: EARP and GARP complex-interacting protein 1 (387 aa).

Met-1 carries the N-acetylmethionine modification. WD repeat units lie at residues 4–48 (DAPV…IIDF), 55–101 (INKN…VWRM), 124–164 (ELLC…LWDL), 172–214 (VLAS…GWDT), 219–258 (QIYC…FWDT), and 263–302 (EPVK…LSNM). The interval 310 to 335 (FGHLVDDDDISDQEDHRSEEKSKEPL) is disordered. Residue Ser-320 is modified to Phosphoserine. A compositionally biased stretch (basic and acidic residues) spans 322–335 (QEDHRSEEKSKEPL). Residues 338–379 (NVIATYEEHEDSVYAVDWSSADPWLFASLSYDGRLVINRVPR) form a WD 7 repeat.

Belongs to the WD repeat EIPR1 family. In terms of assembly, interacts with two multisubunit tethering complexes: EARP composed of VPS50, VPS51, VPS52 and VPS53 subunits and GARP complex composed of VPS51, VPS52, VPS53 and VPS54 subunits. Interacts with SNAP29.

It localises to the golgi apparatus. The protein localises to the trans-Golgi network. Functionally, acts as a component of endosomal retrieval machinery that is involved in protein transport from early endosomes to either recycling endosomes or the trans-Golgi network. Mediates the recruitment of Golgi-associated retrograde protein (GARP) complex to the trans-Golgi network and controls early endosome-to-Golgi transport of internalized protein. Promotes the recycling of internalized transferrin receptor (TFRC) to the plasma membrane through interaction with endosome-associated recycling protein (EARP) complex. Controls proper insulin distribution and secretion, and retention of cargo in mature dense core vesicles. Required for the stability of the endosome-associated retrograde protein (EARP) complex subunits and for proper localization and association of EARP with membranes. In Homo sapiens (Human), this protein is EARP and GARP complex-interacting protein 1.